Reading from the N-terminus, the 1072-residue chain is DNA-directed RNA polymerase subunit beta (1072 aa).

The protein belongs to the RNA polymerase beta chain family. In plastids the minimal PEP RNA polymerase catalytic core is composed of four subunits: alpha, beta, beta', and beta''. When a (nuclear-encoded) sigma factor is associated with the core the holoenzyme is formed, which can initiate transcription.

It localises to the plastid. The protein resides in the chloroplast. The enzyme catalyses RNA(n) + a ribonucleoside 5'-triphosphate = RNA(n+1) + diphosphate. DNA-dependent RNA polymerase catalyzes the transcription of DNA into RNA using the four ribonucleoside triphosphates as substrates. The sequence is that of DNA-directed RNA polymerase subunit beta from Olimarabidopsis pumila (Dwarf rocket).